The sequence spans 198 residues: uncharacterized protein (198 aa).

The PA14 domain occupies 1–110; that stretch reads MTGYFLPPQT…GTTVSDDFEG (110 aa).

Belongs to the flocculin family.

This is an uncharacterized protein from Saccharomyces cerevisiae (strain ATCC 204508 / S288c) (Baker's yeast).